The primary structure comprises 232 residues: Polycomb group RING finger protein 5-B (232 aa).

The RING-type zinc-finger motif lies at Cys-18–Gly-57. Residues Gln-93–Asn-104 are compositionally biased toward basic and acidic residues. Positions Gln-93–Tyr-128 are disordered.

In terms of assembly, component of a PRC1-like complex.

The protein resides in the nucleus. Its function is as follows. Component of Polycomb group (PcG) multiprotein complexes; the complex class is required to maintain the transcriptionally repressive state of some genes. This is Polycomb group RING finger protein 5-B (pcgf5b) from Danio rerio (Zebrafish).